A 261-amino-acid chain; its full sequence is ATP synthase subunit a (261 aa).

Transmembrane regions (helical) follow at residues 28 to 48 (AVHL…LTIF), 89 to 109 (IAPL…MDWV), 140 to 160 (NITF…SIKV), 203 to 223 (LFGN…IGVF), and 229 to 249 (FLWA…FMML).

The protein belongs to the ATPase A chain family. As to quaternary structure, F-type ATPases have 2 components, CF(1) - the catalytic core - and CF(0) - the membrane proton channel. CF(1) has five subunits: alpha(3), beta(3), gamma(1), delta(1), epsilon(1). CF(0) has three main subunits: a(1), b(2) and c(9-12). The alpha and beta chains form an alternating ring which encloses part of the gamma chain. CF(1) is attached to CF(0) by a central stalk formed by the gamma and epsilon chains, while a peripheral stalk is formed by the delta and b chains.

The protein resides in the cell inner membrane. Key component of the proton channel; it plays a direct role in the translocation of protons across the membrane. In Colwellia psychrerythraea (strain 34H / ATCC BAA-681) (Vibrio psychroerythus), this protein is ATP synthase subunit a.